The following is a 423-amino-acid chain: LysM domain-containing GPI-anchored protein 3 (423 aa).

The first 24 residues, 1-24 (MKNPEKPLLLFLILASSLASMATA), serve as a signal peptide directing secretion. 4 disulfide bridges follow: Cys-31/Cys-97, Cys-37/Cys-160, Cys-95/Cys-158, and Cys-97/Cys-160. The LysM 1 domain maps to 107–154 (THYKTRTSDTLGSIADSVYGGLVSPEQIQVANSETDLSVLDVGTKLVI). The N-linked (GlcNAc...) asparagine glycan is linked to Asn-162. Residues 173 to 216 (LSYVVRGIDTMAGIAKRFSTSVTDLTNVNAMGAPDINPGDILAV) form the LysM 2 domain. Disulfide bonds link Cys-221/Cys-253 and Cys-248/Cys-276. N-linked (GlcNAc...) asparagine glycosylation is present at Asn-238. Asn-285 carries N-linked (GlcNAc...) asparagine glycosylation. The GPI-anchor amidated glycine moiety is linked to residue Gly-394. The propeptide at 395 to 423 (GSISIASCPLSYYSFIALLIPIGSCFFVF) is removed in mature form.

Interacts with peptidoglycans.

The protein resides in the cell membrane. Its function is as follows. Required as a cell surface receptor for peptidoglycan (PGN) elicitor signaling leading to innate immunity. Plays an essential role in detecting PGNs and restricting bacterial growth (of Pseudomonas syringae pv. tomato DC3000 for example). This Arabidopsis thaliana (Mouse-ear cress) protein is LysM domain-containing GPI-anchored protein 3 (LYM3).